We begin with the raw amino-acid sequence, 621 residues long: Lethal(3)malignant brain tumor-like protein 4 (621 aa).

The segment at methionine 1–threonine 48 is disordered. Composition is skewed to basic and acidic residues over residues leucine 10–glutamine 20 and glutamate 28–serine 44. MBT repeat units lie at residues tryptophan 52–proline 152, phenylalanine 160–proline 260, and phenylalanine 269–proline 364. Residues valine 370 to glutamate 414 form a CCHHC-type zinc finger. 4 residues coordinate Zn(2+): cysteine 379, cysteine 384, histidine 398, and cysteine 404. The 65-residue stretch at tryptophan 543–serine 607 folds into the SAM domain.

The protein localises to the nucleus. Its function is as follows. Putative Polycomb group (PcG) protein. PcG proteins maintain the transcriptionally repressive state of genes, probably via a modification of chromatin, rendering it heritably changed in its expressibility. The polypeptide is Lethal(3)malignant brain tumor-like protein 4 (L3mbtl4) (Mus musculus (Mouse)).